We begin with the raw amino-acid sequence, 384 residues long: Polyketide synthase BAS (384 aa).

The active-site Nucleophile and monoketide coumarate intermediate is Cys-157. Cys-157 is subject to S-(4-hydroxycinnamyl)cysteine.

The protein belongs to the thiolase-like superfamily. Chalcone/stilbene synthases family. Homodimer.

The catalysed reaction is 4-coumaroyl-CoA + malonyl-CoA + H2O + H(+) = 4-hydroxybenzalacetone + 2 CO2 + 2 CoA. Its pathway is secondary metabolite biosynthesis; flavonoid biosynthesis. Functionally, polyketide synthase producing 4-hydroxybenzalacetone. Can use p-coumaryl-CoA as substrate but does not accept hexanoyl-CoA, isobutyryl-CoA, isovaleryl-CoA, and acetyl-CoA as a substrates. Catalyzes the initial key reaction step in the biosynthesis of phenylbutanoids. This is Polyketide synthase BAS (BAS) from Rheum palmatum (Chinese rhubarb).